The following is a 397-amino-acid chain: Thioredoxin-interacting protein (397 aa).

Residue Lys213 forms a Glycyl lysine isopeptide (Lys-Gly) (interchain with G-Cter in ubiquitin) linkage. Ser362 bears the Phosphoserine mark.

It belongs to the arrestin family. In terms of assembly, homodimer; disulfide-linked. Interacts with TXN/thioredoxin through its redox-active site. Interacts with transcriptional repressors ZBTB16, ZBTB32 and HDAC1. Interacts with DDIT4. Post-translationally, ubiquitinated; undergoes heterotypic 'Lys-48'-/'Lys-63'-branched polyubiquitination catalyzed by ITCH and UBR5 resulting in proteasomal degradation. Deubiquitinated by USP5, leading to TXNIP stabilization. Ubiquitously expressed.

It is found in the cytoplasm. Its function is as follows. May act as an oxidative stress mediator by inhibiting thioredoxin activity or by limiting its bioavailability. Interacts with COPS5 and restores COPS5-induced suppression of CDKN1B stability, blocking the COPS5-mediated translocation of CDKN1B from the nucleus to the cytoplasm. Functions as a transcriptional repressor, possibly by acting as a bridge molecule between transcription factors and corepressor complexes, and over-expression will induce G0/G1 cell cycle arrest. Required for the maturation of natural killer cells. Acts as a suppressor of tumor cell growth. Inhibits the proteasomal degradation of DDIT4, and thereby contributes to the inhibition of the mammalian target of rapamycin complex 1 (mTORC1). The polypeptide is Thioredoxin-interacting protein (Txnip) (Mus musculus (Mouse)).